Here is a 127-residue protein sequence, read N- to C-terminus: V-type proton ATPase subunit F (127 aa).

This sequence belongs to the V-ATPase F subunit family. V-ATPase is a heteromultimeric enzyme made up of two complexes: the ATP-hydrolytic V1 complex and the proton translocation V0 complex. The V1 complex consists of three catalytic AB heterodimers that form a heterohexamer, three peripheral stalks each consisting of EG heterodimers, one central rotor including subunits D and F, and the regulatory subunits C and H. The proton translocation complex V0 consists of the proton transport subunit a, a ring of proteolipid subunits c9c'', rotary subunit d, subunits e and f, and the accessory subunits VhaAC45 and ATP6AP2.

In terms of biological role, subunit of the V1 complex of vacuolar(H+)-ATPase (V-ATPase), a multisubunit enzyme composed of a peripheral complex (V1) that hydrolyzes ATP and a membrane integral complex (V0) that translocates protons. V-ATPase is responsible for acidifying and maintaining the pH of intracellular compartments and in some cell types, is targeted to the plasma membrane, where it is responsible for acidifying the extracellular environment. The sequence is that of V-type proton ATPase subunit F from Aedes aegypti (Yellowfever mosquito).